A 349-amino-acid chain; its full sequence is Protein-arginine kinase (349 aa).

The Phosphagen kinase C-terminal domain occupies 24 to 252 (IVLSSRIRLA…SQIIEQERQA (229 aa)). Residues 27–31 (SSRIR), His89, Arg123, 174–178 (RASVM), and 205–210 (RGIYGE) contribute to the ATP site. Residues 335–340 (RDIKRA) carry the RDXXRA motif of the pArg binding pocket involved in allosteric regulation motif.

The protein belongs to the ATP:guanido phosphotransferase family.

It catalyses the reaction L-arginyl-[protein] + ATP = N(omega)-phospho-L-arginyl-[protein] + ADP + H(+). Appears to be allosterically activated by the binding of pArg-containing polypeptides to the pArg-binding pocket localized in the C-terminal domain of McsB. Its function is as follows. Catalyzes the specific phosphorylation of arginine residues in proteins. The polypeptide is Protein-arginine kinase (Halothermothrix orenii (strain H 168 / OCM 544 / DSM 9562)).